The sequence spans 388 residues: Na(+)/H(+) antiporter NhaA (388 aa).

11 helical membrane passes run 14-34, 59-79, 95-115, 125-145, 154-174, 179-199, 219-239, 254-274, 287-307, 328-348, and 356-376; these read GGII…SGFT, MLLW…GLEV, AFPV…YLAF, GWAI…ALLG, IFLM…IALF, LSMV…VLNL, VLKS…FIPL, VLHP…NAGV, ILPL…ISLF, IMAV…IASL, and ALIN…AVIG.

This sequence belongs to the NhaA Na(+)/H(+) (TC 2.A.33) antiporter family.

Its subcellular location is the cell inner membrane. The catalysed reaction is Na(+)(in) + 2 H(+)(out) = Na(+)(out) + 2 H(+)(in). Its function is as follows. Na(+)/H(+) antiporter that extrudes sodium in exchange for external protons. The sequence is that of Na(+)/H(+) antiporter NhaA from Citrobacter koseri (strain ATCC BAA-895 / CDC 4225-83 / SGSC4696).